The sequence spans 168 residues: ATP synthase subunit b (168 aa).

A helical membrane pass occupies residues 10-30; that stretch reads LYLGDMLFYLVSFLIMAALVW. Residues 61 to 80 are disordered; the sequence is EAQKLAAKRQEELKGSRQEA.

It belongs to the ATPase B chain family. In terms of assembly, F-type ATPases have 2 components, F(1) - the catalytic core - and F(0) - the membrane proton channel. F(1) has five subunits: alpha(3), beta(3), gamma(1), delta(1), epsilon(1). F(0) has three main subunits: a(1), b(2) and c(10-14). The alpha and beta chains form an alternating ring which encloses part of the gamma chain. F(1) is attached to F(0) by a central stalk formed by the gamma and epsilon chains, while a peripheral stalk is formed by the delta and b chains.

It localises to the cell membrane. Functionally, f(1)F(0) ATP synthase produces ATP from ADP in the presence of a proton or sodium gradient. F-type ATPases consist of two structural domains, F(1) containing the extramembraneous catalytic core and F(0) containing the membrane proton channel, linked together by a central stalk and a peripheral stalk. During catalysis, ATP synthesis in the catalytic domain of F(1) is coupled via a rotary mechanism of the central stalk subunits to proton translocation. Component of the F(0) channel, it forms part of the peripheral stalk, linking F(1) to F(0). The polypeptide is ATP synthase subunit b (Limosilactobacillus fermentum (strain NBRC 3956 / LMG 18251) (Lactobacillus fermentum)).